Reading from the N-terminus, the 433-residue chain is Dihydroorotase (433 aa).

Residues histidine 63 and histidine 65 each contribute to the Zn(2+) site. Substrate contacts are provided by residues 65 to 67 (HLR) and asparagine 97. Positions 155, 182, and 235 each coordinate Zn(2+). Asparagine 283 contacts substrate. Aspartate 310 contributes to the Zn(2+) binding site. Aspartate 310 is an active-site residue. Histidine 314 provides a ligand contact to substrate.

It belongs to the metallo-dependent hydrolases superfamily. DHOase family. Class I DHOase subfamily. Zn(2+) is required as a cofactor.

The enzyme catalyses (S)-dihydroorotate + H2O = N-carbamoyl-L-aspartate + H(+). It functions in the pathway pyrimidine metabolism; UMP biosynthesis via de novo pathway; (S)-dihydroorotate from bicarbonate: step 3/3. Functionally, catalyzes the reversible cyclization of carbamoyl aspartate to dihydroorotate. The protein is Dihydroorotase of Anaeromyxobacter dehalogenans (strain 2CP-C).